We begin with the raw amino-acid sequence, 205 residues long: MAMQKLFTYIYEFIEYRKMVLLEEKVPYDKFVQMIFNTGFFRINAETLNHGIVSVFIFGANGKYVHHGGDMRTLLTNALNEKKQYEELILIVDKPILGKKNILDIIVEQRAANPTVVINIYPYHLFCINIPKVSAIPRHKLITQEEAQAFLGREYLQPQDLMQISASDPPVVWLGGRPGDFVQIERPSETAMHAVVIRYITKSKI.

This sequence belongs to the archaeal RpoH/eukaryotic RPB5 RNA polymerase subunit family. Part of the viral DNA-directed RNA polymerase that consists of 8 polII-like subunits (RPB1, RPB2, RPB3, RPB5, RPB6, RPB7, RPB9, RPB10), a capping enzyme and a termination factor.

The protein localises to the host cytoplasm. Its subcellular location is the virion. Functionally, component of the DNA-directed RNA polymerase (RNAP) that catalyzes the transcription in the cytoplasm of viral DNA into RNA using the four ribonucleoside triphosphates as substrates. In African swine fever virus (isolate Pig/Kenya/KEN-50/1950) (ASFV), this protein is DNA-directed RNA polymerase RPB5 homolog.